The chain runs to 158 residues: 18.1 kDa class I heat shock protein (158 aa).

The sHSP domain maps to 44-158 (ENPAFVSTRV…AEVKSIEISG (115 aa)).

Belongs to the small heat shock protein (HSP20) family. In terms of assembly, forms oligomeric structures.

The protein resides in the cytoplasm. This Pisum sativum (Garden pea) protein is 18.1 kDa class I heat shock protein (HSP18.1).